A 2021-amino-acid chain; its full sequence is HEAT repeat-containing protein 5A (2021 aa).

HEAT repeat units follow at residues 795 to 836 and 1059 to 1096; these read SQRP…HLAS and VNLS…REAA. Disordered stretches follow at residues 1503–1528 and 1989–2012; these read EGNG…LPAD and RGNQ…HGSP. The span at 1512 to 1522 shows a compositional bias: polar residues; it reads VTPTSMGQERG.

Belongs to the HEATR5 family.

This chain is HEAT repeat-containing protein 5A (heatr5a), found in Xenopus tropicalis (Western clawed frog).